We begin with the raw amino-acid sequence, 460 residues long: Argininosuccinate lyase (460 aa).

This sequence belongs to the lyase 1 family. Argininosuccinate lyase subfamily.

Its subcellular location is the cytoplasm. It catalyses the reaction 2-(N(omega)-L-arginino)succinate = fumarate + L-arginine. It functions in the pathway amino-acid biosynthesis; L-arginine biosynthesis; L-arginine from L-ornithine and carbamoyl phosphate: step 3/3. This is Argininosuccinate lyase from Actinobacillus succinogenes (strain ATCC 55618 / DSM 22257 / CCUG 43843 / 130Z).